The sequence spans 365 residues: Peptide chain release factor 2 (365 aa).

Residue glutamine 252 is modified to N5-methylglutamine.

This sequence belongs to the prokaryotic/mitochondrial release factor family. Methylated by PrmC. Methylation increases the termination efficiency of RF2.

It is found in the cytoplasm. Peptide chain release factor 2 directs the termination of translation in response to the peptide chain termination codons UGA and UAA. This is Peptide chain release factor 2 from Proteus mirabilis (strain HI4320).